The primary structure comprises 213 residues: Thiamine-phosphate synthase (213 aa).

Residues 40–44 (QFREK) and asparagine 75 contribute to the 4-amino-2-methyl-5-(diphosphooxymethyl)pyrimidine site. Residues aspartate 76 and aspartate 95 each contribute to the Mg(2+) site. Serine 113 is a 4-amino-2-methyl-5-(diphosphooxymethyl)pyrimidine binding site. 139-141 (TPS) is a binding site for 2-[(2R,5Z)-2-carboxy-4-methylthiazol-5(2H)-ylidene]ethyl phosphate. Lysine 142 provides a ligand contact to 4-amino-2-methyl-5-(diphosphooxymethyl)pyrimidine. 2-[(2R,5Z)-2-carboxy-4-methylthiazol-5(2H)-ylidene]ethyl phosphate-binding positions include glycine 171 and 191 to 192 (IS).

Belongs to the thiamine-phosphate synthase family. It depends on Mg(2+) as a cofactor.

The catalysed reaction is 2-[(2R,5Z)-2-carboxy-4-methylthiazol-5(2H)-ylidene]ethyl phosphate + 4-amino-2-methyl-5-(diphosphooxymethyl)pyrimidine + 2 H(+) = thiamine phosphate + CO2 + diphosphate. It catalyses the reaction 2-(2-carboxy-4-methylthiazol-5-yl)ethyl phosphate + 4-amino-2-methyl-5-(diphosphooxymethyl)pyrimidine + 2 H(+) = thiamine phosphate + CO2 + diphosphate. It carries out the reaction 4-methyl-5-(2-phosphooxyethyl)-thiazole + 4-amino-2-methyl-5-(diphosphooxymethyl)pyrimidine + H(+) = thiamine phosphate + diphosphate. It functions in the pathway cofactor biosynthesis; thiamine diphosphate biosynthesis; thiamine phosphate from 4-amino-2-methyl-5-diphosphomethylpyrimidine and 4-methyl-5-(2-phosphoethyl)-thiazole: step 1/1. Condenses 4-methyl-5-(beta-hydroxyethyl)thiazole monophosphate (THZ-P) and 2-methyl-4-amino-5-hydroxymethyl pyrimidine pyrophosphate (HMP-PP) to form thiamine monophosphate (TMP). The polypeptide is Thiamine-phosphate synthase (Staphylococcus aureus (strain JH1)).